The sequence spans 404 residues: Glycosylated lysosomal membrane protein (404 aa).

Residues 1–35 (MFRCWGPHWGWVPCAPTPWLLLSLLVCSAPFGLQG) form the signal peptide. The Lumenal portion of the chain corresponds to 36 to 370 (EETRQVSMEV…VDIFSPLVLG (335 aa)). N-linked (GlcNAc...) asparagine glycans are attached at residues N64, N85, N94, N133, N157, N166, N185, N228, and N331. A helical transmembrane segment spans residues 371-391 (IMAVALGAPGLMFLGGGLFLL). Topologically, residues 392 to 404 (LRHRRYSEYQSIN) are cytoplasmic. Positions 400 to 404 (YQSIN) match the Lysosomal targeting motif motif.

It belongs to the GLMP family. In terms of assembly, interacts (via lumenal domain) with lysosomal protein MFSD1; the interaction starts while both proteins are still in the endoplasmic reticulum and is required for stabilization of MFSD1 in lysosomes but has no direct effect on its targeting to lysosomes or transporter activity. Post-translationally, highly N-glycosylated. N-glycosylation is essential for GLMP stability and for MFSD1 lysosomal localization. As to expression, detected in brain, heart, liver, kidney, lung, intestine, testis and spleen. Expressed at highest levels in kidney cortex. However, another study reports highest expression levels in lung. Expressed in myoblasts with expression increasing during differentiation into myotubes.

The protein localises to the lysosome membrane. Functionally, required to protect lysosomal transporter MFSD1 from lysosomal proteolysis and for MFSD1 lysosomal localization. The chain is Glycosylated lysosomal membrane protein from Mus musculus (Mouse).